A 330-amino-acid polypeptide reads, in one-letter code: Putative aminohydrolase AF_1775 (330 aa).

Zn(2+)-binding residues include histidine 54, histidine 56, histidine 181, and aspartate 253.

Belongs to the metallo-dependent hydrolases superfamily. ATZ/TRZ family.

This is Putative aminohydrolase AF_1775 from Archaeoglobus fulgidus (strain ATCC 49558 / DSM 4304 / JCM 9628 / NBRC 100126 / VC-16).